We begin with the raw amino-acid sequence, 163 residues long: Nucleotide-binding protein tll0793 (163 aa).

The protein belongs to the YajQ family.

Its function is as follows. Nucleotide-binding protein. This chain is Nucleotide-binding protein tll0793, found in Thermosynechococcus vestitus (strain NIES-2133 / IAM M-273 / BP-1).